Reading from the N-terminus, the 328-residue chain is Gonadotropin-releasing hormone receptor (328 aa).

The Extracellular portion of the chain corresponds to 1-38; that stretch reads MQDDTSSEQNPTHCSAINSSVPLVQGALPTLTLSGKIR. Asparagine 18 is a glycosylation site (N-linked (GlcNAc...) asparagine). A helical transmembrane segment spans residues 39 to 59; sequence VTVTFFLFLVSTTLNASFLLK. The Cytoplasmic portion of the chain corresponds to 60–84; the sequence is LQKWTQKKEKGKKLSRMKVLLKHLT. A helical transmembrane segment spans residues 85–105; the sequence is LANLLETLIVMPLDGMWNITV. Residues 106-115 are Extracellular-facing; it reads QWYAGELLCK. Residues cysteine 114 and cysteine 196 are joined by a disulfide bond. The chain crosses the membrane as a helical span at residues 116 to 136; sequence ILSYLKLFSMYAPAFMMVVIS. Over 137-160 the chain is Cytoplasmic; the sequence is LDRSMAITRPLPVQSNRKLEQSMT. The chain crosses the membrane as a helical span at residues 161 to 181; that stretch reads GLAWGLSSVLAGPQLYIFKMI. At 182 to 208 the chain is on the extracellular side; it reads HLENGPGQTEVFSQCVTHCSFPQWWHQ. Residues 209–229 traverse the membrane as a helical segment; it reads AFYNFFTFICLFIIPLLIMLI. Residues 230–271 are Cytoplasmic-facing; that stretch reads CNAKIIFTLTQVLQQDSNKLQLNQSKNNIPRARLRTLKMTVA. A helical membrane pass occupies residues 272–292; the sequence is FAASFIVCWTPYYVLGLWYWF. The Extracellular portion of the chain corresponds to 293 to 306; the sequence is DPGMLHRMSEPVNH. Residues 307 to 327 form a helical membrane-spanning segment; sequence FFFLFAFLNPCFDPLIYGYFS. A topological domain (cytoplasmic) is located at residue leucine 328.

Belongs to the G-protein coupled receptor 1 family.

It localises to the cell membrane. In terms of biological role, receptor for gonadotropin releasing hormone (GnRH) that mediates the action of GnRH to stimulate the secretion of the gonadotropic hormones luteinizing hormone (LH) and follicle-stimulating hormone (FSH). This receptor mediates its action by association with G-proteins that activate a phosphatidylinositol-calcium second messenger system. The sequence is that of Gonadotropin-releasing hormone receptor (GNRHR) from Cavia porcellus (Guinea pig).